The chain runs to 183 residues: Adenine phosphoribosyltransferase (183 aa).

This sequence belongs to the purine/pyrimidine phosphoribosyltransferase family. In terms of assembly, homodimer.

It is found in the cytoplasm. It carries out the reaction AMP + diphosphate = 5-phospho-alpha-D-ribose 1-diphosphate + adenine. It participates in purine metabolism; AMP biosynthesis via salvage pathway; AMP from adenine: step 1/1. Its function is as follows. Catalyzes a salvage reaction resulting in the formation of AMP, that is energically less costly than de novo synthesis. This is Adenine phosphoribosyltransferase from Shewanella oneidensis (strain ATCC 700550 / JCM 31522 / CIP 106686 / LMG 19005 / NCIMB 14063 / MR-1).